The sequence spans 638 residues: Chaperone protein HtpG (638 aa).

The interval 1–346 (MSQQETHGFQ…SNDLPLNVSR (346 aa)) is a; substrate-binding. The tract at residues 347–563 (EILQDNKVTT…EGEMSTQMIK (217 aa)) is b. The tract at residues 564-638 (LMEAAGQAVP…MNEMLLAKLK (75 aa)) is c.

This sequence belongs to the heat shock protein 90 family. In terms of assembly, homodimer.

The protein localises to the cytoplasm. In terms of biological role, molecular chaperone. Has ATPase activity. In Shewanella sediminis (strain HAW-EB3), this protein is Chaperone protein HtpG.